The following is a 189-amino-acid chain: MQVILLQRVAKLGQMGEVVNVKDGYARNFLLPQGKALRANESNIKSFEARKAQLEAQNLETKKEAAAVAEKLDGQSFVVIRSASDSGALYGSVTTRDAAEAATEAGFTVGRGQIVLDRPIKDLGLHTVTVTLHPEVVVKITLNVARSVEEAELQASGKSIQELAAEAEAAADFEIAELFDEIGAASQDD.

It belongs to the bacterial ribosomal protein bL9 family.

In terms of biological role, binds to the 23S rRNA. The protein is Large ribosomal subunit protein bL9 of Cereibacter sphaeroides (strain KD131 / KCTC 12085) (Rhodobacter sphaeroides).